A 460-amino-acid chain; its full sequence is MGESVLSRLGQWISNTPLRSLDQAYEAALRIKAIEDQYFQGGSIGSNGQHGQNVSRYFQIQLRRQLRQIDLRLAEFRASSAFSRLPDPEQNGSGPTSAQDKAQQLHAAEANVSESSSENSENGRQRRDLSILEKLQFIDQVTSRYKRPTRKSQPISASISTSPEPLERPEQPTSTQPSSSNVSVKAGSGNGAAPVASKAAILPRSILRTASQIRRELSSQAEEELIQEYREARTRTLVSIRFLLLLAILPLLTQILSKNFLFGPLVDHLQQREPAIVALSHEFQEKALTEFEFFKERMEFERALHHQSPEWDLESADQLSMKAEELLKKYSRRNSEGLKNILADLLSLLVFGWLIFVGREEIEVLKSFLDRLIYGLSDSAKAFIIILFTDVFVGYHSPHGWEVLLGNLAAHLGVPENRDFIYGFIATFPVFLDTLFKYWIFRYLNRVSPSSVATYRAMND.

Disordered stretches follow at residues 82 to 128 (FSRL…QRRD) and 143 to 190 (SRYK…GSGN). The span at 90–102 (QNGSGPTSAQDKA) shows a compositional bias: polar residues. Residues 107–120 (AAEANVSESSSENS) show a composition bias toward low complexity. Over residues 151–163 (KSQPISASISTSP) the composition is skewed to polar residues. Residues 171–184 (QPTSTQPSSSNVSV) show a composition bias toward low complexity. The next 4 helical transmembrane spans lie at 242 to 262 (FLLLLAILPLLTQILSKNFLF), 337 to 357 (GLKNILADLLSLLVFGWLIFV), 373 to 393 (IYGLSDSAKAFIIILFTDVFV), and 420 to 440 (FIYGFIATFPVFLDTLFKYWI).

The protein belongs to the CemA family.

It localises to the cell inner membrane. Functionally, required for H(+) efflux immediately after light irradiation to form a rapid H(+) concentration gradient across the thylakoid membranes. Together with PxcL, contributes to transient H(+) uptake following dark to light transition. The polypeptide is Proton extrusion protein PxcA (Synechococcus sp. (strain JA-2-3B'a(2-13)) (Cyanobacteria bacterium Yellowstone B-Prime)).